Consider the following 451-residue polypeptide: uncharacterized protein (451 aa).

Disordered stretches follow at residues 89–150 and 164–222; these read PRLS…ISRY and QVGE…KTFG. A compositionally biased stretch (polar residues) spans 104–121; it reads QKPTISRESFVWESSASI. The segment covering 137-147 has biased composition (low complexity); it reads SSTPSIEPESI. The segment covering 175–222 has biased composition (basic and acidic residues); that stretch reads RAADSENERRPSEVREAPESRRRRETSETGSDKSKAPPPIKEIKKTFG. Residues 358–376 form a helical membrane-spanning segment; it reads LIGLMLFQTTIFIISKIIA. The segment at 401-451 is disordered; the sequence is RNGSSSGFASGTSSPLVFIPRTKRPSLVPSEKKMRGPSVTRDLAAEQERDA. The segment covering 403-414 has biased composition (low complexity); the sequence is GSSSGFASGTSS.

Belongs to the IIV-6 067R family.

It is found in the membrane. This is an uncharacterized protein from Invertebrate iridescent virus 3 (IIV-3).